The sequence spans 524 residues: Bifunctional purine biosynthesis protein PurH (524 aa).

Residues 1–145 (MIQQALLSVS…KNHRDVTVIV (145 aa)) enclose the MGS-like domain.

Belongs to the PurH family.

The catalysed reaction is (6R)-10-formyltetrahydrofolate + 5-amino-1-(5-phospho-beta-D-ribosyl)imidazole-4-carboxamide = 5-formamido-1-(5-phospho-D-ribosyl)imidazole-4-carboxamide + (6S)-5,6,7,8-tetrahydrofolate. It carries out the reaction IMP + H2O = 5-formamido-1-(5-phospho-D-ribosyl)imidazole-4-carboxamide. The protein operates within purine metabolism; IMP biosynthesis via de novo pathway; 5-formamido-1-(5-phospho-D-ribosyl)imidazole-4-carboxamide from 5-amino-1-(5-phospho-D-ribosyl)imidazole-4-carboxamide (10-formyl THF route): step 1/1. It participates in purine metabolism; IMP biosynthesis via de novo pathway; IMP from 5-formamido-1-(5-phospho-D-ribosyl)imidazole-4-carboxamide: step 1/1. The chain is Bifunctional purine biosynthesis protein PurH from Ralstonia pickettii (strain 12J).